A 382-amino-acid chain; its full sequence is MKITKLTTWRLPPRWMFLKIETDEGIVGWGEPIVEGRARTVEAAVHELGDYLIGQDPARINDLWQVMYRAGFYRGGPILMSAIAGIDQALWDIKGKALNAPVWQLLGGLVRDKIKAYSWVGGDRPAEVIAGINTLRGMGFDTFKLNGCQEMGMIDSSRTVDAAVNTVAQIREAFGNDIEFGLDFHGRVSAPMAKLLIKELEPYRPLFIEEPVLAEQAEYYPRLAAQTAIPLAAGERMFSRFEFKRVLEAGGLAILQPDLSHAGGITECFKIAGMAEAADVSLAPHCPLGPIALAACLHVDFVSYNAVFQEQSMGIHYNQGAELLDFVKNKADFNMEGGYFKPLMKPGLGVDIDEDKVIEMSRRAPDWRNPVWRLADGVVAEW.

Aspartate 183 provides a ligand contact to Mg(2+). Catalysis depends on histidine 185, which acts as the Proton donor. 2 residues coordinate Mg(2+): glutamate 209 and glutamate 235. The active-site Proton acceptor is the histidine 285.

The protein belongs to the mandelate racemase/muconate lactonizing enzyme family. GalD subfamily. Requires Mg(2+) as cofactor.

It carries out the reaction D-galactonate = 2-dehydro-3-deoxy-D-galactonate + H2O. It participates in carbohydrate acid metabolism; D-galactonate degradation; D-glyceraldehyde 3-phosphate and pyruvate from D-galactonate: step 1/3. Catalyzes the dehydration of D-galactonate to 2-keto-3-deoxy-D-galactonate. The sequence is that of D-galactonate dehydratase from Klebsiella pneumoniae (strain 342).